Consider the following 519-residue polypeptide: Ribose import ATP-binding protein RbsA 2 (519 aa).

ABC transporter domains are found at residues 15 to 252 (FRLR…VGRP) and 262 to 506 (HEPG…TGVR). 47 to 54 (GENGAGKS) serves as a coordination point for ATP.

The protein belongs to the ABC transporter superfamily. Ribose importer (TC 3.A.1.2.1) family. The complex is composed of an ATP-binding protein (RbsA), two transmembrane proteins (RbsC) and a solute-binding protein (RbsB).

Its subcellular location is the cell membrane. The catalysed reaction is D-ribose(out) + ATP + H2O = D-ribose(in) + ADP + phosphate + H(+). Its function is as follows. Part of the ABC transporter complex RbsABC involved in ribose import. Responsible for energy coupling to the transport system. This chain is Ribose import ATP-binding protein RbsA 2, found in Rubrobacter xylanophilus (strain DSM 9941 / JCM 11954 / NBRC 16129 / PRD-1).